The sequence spans 553 residues: Cytochrome P450 86A2 (553 aa).

A helical membrane pass occupies residues 2-20 (DVSNTMLLVAVVAAYWLWF). Cys-459 provides a ligand contact to heme.

This sequence belongs to the cytochrome P450 family. It depends on heme as a cofactor. As to expression, expressed in leaves, stems, flowers and siliques. Expressed at low levels in roots. Expressed in guard cells of cotyledons and leaves.

Its subcellular location is the membrane. It carries out the reaction an organic molecule + reduced [NADPH--hemoprotein reductase] + O2 = an alcohol + oxidized [NADPH--hemoprotein reductase] + H2O + H(+). Its function is as follows. Catalyzes the omega-hydroxylation of various fatty acids (FA). Acts on saturated and unsaturated fatty acids with chain lengths from C12 to C18. Plays a major role in the biosynthesis of extracellular lipids. Involved in the biosynthesis of hydroxylated fatty acids required for cutin biosynthesis, cuticle development and repression of bacterial type III gene expression. The polypeptide is Cytochrome P450 86A2 (CYP86A2) (Arabidopsis thaliana (Mouse-ear cress)).